We begin with the raw amino-acid sequence, 392 residues long: Pannexin-3 (392 aa).

At 1–39 the chain is on the cytoplasmic side; sequence MSLAHTAAEYMLSDALLPDRRGSRLKGLRLELPLDKMVK. A helical transmembrane segment spans residues 40-60; it reads FVTVGFPLLLMSLAFAQEFSS. Residues 61–113 are Extracellular-facing; it reads GSPISCFSPSNFSVRQAVFVDSSCWDSLAHYKQDEAGQYTVKSLWPHKALPYS. N-linked (GlcNAc...) asparagine glycosylation is present at N71. A helical transmembrane segment spans residues 114–134; sequence LLALAVAMYLPVLLWQYAAVP. Over 135-215 the chain is Cytoplasmic; that stretch reads ALSSDLLFII…VATYLLRNAL (81 aa). Residues 216-236 form a helical membrane-spanning segment; the sequence is LLLFTSATYLYLGHFHLDVFF. Residues 237-267 are Extracellular-facing; sequence QEEFSCSIKTGLLHEETHVPELITCRLTSLS. Residues 268–288 form a helical membrane-spanning segment; the sequence is VFQIVSVSSVAIYTVLVPVII. At 289-392 the chain is on the cytoplasmic side; it reads YNLTRLCRWD…LTQHTYDEHP (104 aa).

This sequence belongs to the pannexin family. As to quaternary structure, homoheptameric. Skin.

It is found in the cell membrane. It localises to the cell junction. The protein resides in the gap junction. The protein localises to the endoplasmic reticulum membrane. It catalyses the reaction Ca(2+)(in) = Ca(2+)(out). It carries out the reaction ATP(in) = ATP(out). In terms of biological role, regulator of osteoblast differentiation by functionning as a Ca(2+) channel in the endoplasmic reticulum which regulates calmodulin (CaM) pathways. Allows ATP release into the extracellular space and activation or purinergic receptors. The sequence is that of Pannexin-3 (Panx3) from Rattus norvegicus (Rat).